Reading from the N-terminus, the 566-residue chain is Chromatin assembly factor 1 subunit B (566 aa).

6 WD repeats span residues 11-54 (HNKE…DGKA), 64-103 (RHTK…ELEP), 127-166 (GHLE…KVSI), 169-208 (EHKS…VAFN), 228-279 (FHDD…RPMG), and 351-392 (IHYH…IPLK). Disordered regions lie at residues 411–481 (KSQP…NQPR) and 501–566 (IPLK…KPNK). Polar residues-rich tracts occupy residues 425–437 (TEGT…TLQP) and 469–478 (QPASQSTKVN).

Belongs to the WD repeat HIR1 family. As to quaternary structure, interacts with CHAF1A.

The protein localises to the nucleus. In terms of biological role, acts as a component of the histone chaperone complex chromatin assembly factor 1 (CAF-1), which assembles histone octamers onto DNA during replication and repair. CAF-1 performs the first step of the nucleosome assembly process, bringing newly synthesized histones H3 and H4 to replicating DNA; histones H2A/H2B can bind to this chromatin precursor subsequent to DNA replication to complete the histone octamer. In Gallus gallus (Chicken), this protein is Chromatin assembly factor 1 subunit B (CHAF1B).